The primary structure comprises 119 residues: DNA-binding protein inhibitor ID-3 (119 aa).

One can recognise a bHLH domain in the interval 28–80 (RGKSPAAEEPLSLLDDMNHCYSRLRELVPGVPRGTQLSQVEILQRVIDYILDL).

Homodimer, and heterodimer with other HLH proteins. Interacts with COPS5 and COPS7A. Interacts with IFI204. Interacts with GATA4 and NKX2-5. Interacts with ANKRD2; both proteins cooperate in myoblast differentiation. Interacts with CLOCK and BMAL1.

Its subcellular location is the nucleus. Its function is as follows. Transcriptional regulator (lacking a basic DNA binding domain) which negatively regulates the basic helix-loop-helix (bHLH) transcription factors by forming heterodimers and inhibiting their DNA binding and transcriptional activity. Implicated in regulating a variety of cellular processes, including cellular growth, senescence, differentiation, apoptosis, angiogenesis, and neoplastic transformation. Involved in myogenesis by inhibiting skeletal muscle and cardiac myocyte differentiation and promoting muscle precursor cells proliferation. Inhibits the binding of E2A-containing protein complexes to muscle creatine kinase E-box enhancer. Regulates the circadian clock by repressing the transcriptional activator activity of the CLOCK-BMAL1 heterodimer. The chain is DNA-binding protein inhibitor ID-3 (ID3) from Bos taurus (Bovine).